The chain runs to 1202 residues: MNKTKRKQQSNKVALKRDYKSDSDSDGDADALSTNDGFVEPEQKPIISKPPQKKKKYKDNETNKVKPPTIEEMKELRDTRNLFHSNLFKLQVKEMLEELHLKSKYTDYIDKWLENFTTFTEQLEDGLMDRCQLEVPLHLHKKTINFIFSKPEQPPQLIGAASQGTLLQPNFIVDIALEMPKKCFEKDDYLNLIYDQKRALYLAYVTDKMKSSSIYREDQFAYNYYANNPLKPVLELTPFAKIGKHLKFRLFITAPVETFRLGRFVPSNNNIRPILFNDEWNLEEQPLPSTQHYNANVLFDLTLSANQSLLNKSFQGRRNFQDGLLLLKVWLRQRQLDVGFSGFSSYILAMYIVHLNQQRVLHQSSSSYQVARTVWNQLANSDWTKGISLAQQATQEQLSFVVGFYDVCFMDITGHYNLCSNVPLAVYKRVREEAKLAVDLLNDMKINSFSYIFMQKCPLYTRVDNILKITKATSVQQLLLLQNHTEMKYDYANYGYPQMLKTLTDLLEKGLAQRIHGIIPLETAVSPWSVDSKAPIIGQSIQLGLILNPEHAYEVLDRGPASQDDDEGAAEFRSFWGDKSNLRRFQDGSICEAVVWAAVKDSPAKKRLIVKDICLHLLEHHFKLDKDDVQFIANELDIVYKLSPWFKVNKLMDKTKMKEELDQNTDSEALTPNVIRCYDELSRQLHGLNDLPLEIVSISGVSPIFRYCESQPVLPQTRLLANRRIHTNHVLRVVIQLGQSGKWPNELAALRALKTAFLIEIGEKLKEQCHLNWSLTSEGLLIIKRGYCFLIELAHSKESALLKQQINERGITTYVDNPQSRDLERRHYILPKVSGALHSLHQSHSAYGPTVLIAKQWLASQLIDDGLWSPMATELLVAYLYQQRHAPFITAAPQTGFIRLLQLMSLSDWQGELFLLNFNNSWEDQQIADLEHSFRSDRESYPPLALATSYDQQHAGRLWTTDETPNRLVLNHVSKLARHALELIETNLMSKSLQFLRPAQLFRASNEGYDLVIQLKPELLANSLNYDMGSPFVDFGQPNFNLPLAGQDRLAHIVAHLRSAYSDYAAFFYKPHGGKELAIMWKPPNVFAPKAFKVNELQASTPCVGNRNQVQVSRDTLLEDFKLLLKDFYARICTTEDLKREQKQHSKPKRYFQINPKQFENESMKPKKQIHKPTKAKTKTINTKKLKGKKILLKSKPIKALV.

Residues 1 to 64 (MNKTKRKQQS…KKYKDNETNK (64 aa)) form a disordered region.

The protein belongs to the NRAP family. As to quaternary structure, part of the small subunit (SSU) processome, composed of more than 70 proteins and the RNA chaperone small nucleolar RNA (snoRNA) U3.

It localises to the nucleus. The protein localises to the nucleolus. Its subcellular location is the chromosome. Its function is as follows. Part of the small subunit (SSU) processome, first precursor of the small eukaryotic ribosomal subunit. During the assembly of the SSU processome in the nucleolus, many ribosome biogenesis factors, an RNA chaperone and ribosomal proteins associate with the nascent pre-rRNA and work in concert to generate RNA folding, modifications, rearrangements and cleavage as well as targeted degradation of pre-ribosomal RNA by the RNA exosome. This chain is Nucleolar protein 6, found in Drosophila willistoni (Fruit fly).